The primary structure comprises 380 residues: MPSPLCIALVAGEASGDILGSGLMRALKVRHPDIRFIGVGGPLMEAEGMQSSFPMERLSVMGLVEVLGRLRELLARRKLLVQTLINEKPDVFIGIDAPDFTLNIELQLRRAGIKTVHYVSPSVWAWRQKRVLKIREGCDLMLTLLPFEARFYEEQGVPVRFVGHPLADTIPLESDRAGARAGLGLAQETPVVALMPGSRGGEVGRLGGLFFDTAERLLARCPELRFVLPCASPQRRAQVEQLLQGRDLPVTLLDGQSHVALAACDAVLIASGTATLEALLYKRPMVVAYRLAPLTFWILKRMVKSPYVSLPNLLAQRLLVPELLQDDATPEALARTLLPLIDDGREQTAGFDAIHRILRRDASNQAADAVLSLLGRSPSL.

It belongs to the LpxB family.

It catalyses the reaction a lipid X + a UDP-2-N,3-O-bis[(3R)-3-hydroxyacyl]-alpha-D-glucosamine = a lipid A disaccharide + UDP + H(+). The protein operates within bacterial outer membrane biogenesis; LPS lipid A biosynthesis. In terms of biological role, condensation of UDP-2,3-diacylglucosamine and 2,3-diacylglucosamine-1-phosphate to form lipid A disaccharide, a precursor of lipid A, a phosphorylated glycolipid that anchors the lipopolysaccharide to the outer membrane of the cell. This chain is Lipid-A-disaccharide synthase, found in Pseudomonas syringae pv. syringae (strain B728a).